Consider the following 59-residue polypeptide: Large ribosomal subunit protein bL32 (59 aa).

Positions M1–R22 are enriched in basic residues. The interval M1–E59 is disordered.

The protein belongs to the bacterial ribosomal protein bL32 family.

The chain is Large ribosomal subunit protein bL32 from Acaryochloris marina (strain MBIC 11017).